Reading from the N-terminus, the 396-residue chain is Inositol hexakisphosphate kinase 3 (396 aa).

206-214 contacts substrate; sequence PCILDLKMG.

This sequence belongs to the inositol phosphokinase (IPK) family. Highly expressed in cerebellum, brain cortex, kidney, thymus and lung. Detected at lower levels in hippocampus, testis, heart and olfactory bulb.

The protein localises to the cytoplasm. The catalysed reaction is 1D-myo-inositol hexakisphosphate + ATP = 5-diphospho-1D-myo-inositol 1,2,3,4,6-pentakisphosphate + ADP. It catalyses the reaction 1-diphospho-1D-myo-inositol 2,3,4,5,6-pentakisphosphate + ATP + H(+) = 1,5-bis(diphospho)-1D-myo-inositol 2,3,4,6-tetrakisphosphate + ADP. In terms of biological role, converts inositol hexakisphosphate (InsP6) to diphosphoinositol pentakisphosphate (InsP7/PP-InsP5). Converts 1,3,4,5,6-pentakisphosphate (InsP5) to PP-InsP4. This chain is Inositol hexakisphosphate kinase 3 (Ip6k3), found in Mus musculus (Mouse).